A 185-amino-acid polypeptide reads, in one-letter code: NADH-quinone oxidoreductase subunit B (185 aa).

The [4Fe-4S] cluster site is built by cysteine 38, cysteine 39, cysteine 104, and cysteine 133.

The protein belongs to the complex I 20 kDa subunit family. NDH-1 is composed of 14 different subunits. Subunits NuoB, C, D, E, F, and G constitute the peripheral sector of the complex. The cofactor is [4Fe-4S] cluster.

It is found in the cell membrane. The enzyme catalyses a quinone + NADH + 5 H(+)(in) = a quinol + NAD(+) + 4 H(+)(out). Its function is as follows. NDH-1 shuttles electrons from NADH, via FMN and iron-sulfur (Fe-S) centers, to quinones in the respiratory chain. The immediate electron acceptor for the enzyme in this species is believed to be a menaquinone. Couples the redox reaction to proton translocation (for every two electrons transferred, four hydrogen ions are translocated across the cytoplasmic membrane), and thus conserves the redox energy in a proton gradient. This is NADH-quinone oxidoreductase subunit B from Cutibacterium acnes (strain DSM 16379 / KPA171202) (Propionibacterium acnes).